The sequence spans 154 residues: Large ribosomal subunit protein bL19 (154 aa).

A disordered region spans residues 1–33 (MAADPKDTTVTDENTETAATAEVETVASAPTSP). Residues 16–27 (ETAATAEVETVA) show a composition bias toward low complexity.

It belongs to the bacterial ribosomal protein bL19 family.

In terms of biological role, this protein is located at the 30S-50S ribosomal subunit interface and may play a role in the structure and function of the aminoacyl-tRNA binding site. The sequence is that of Large ribosomal subunit protein bL19 from Parasynechococcus marenigrum (strain WH8102).